The primary structure comprises 220 residues: N-(5'-phosphoribosyl)anthranilate isomerase (220 aa).

It belongs to the TrpF family.

The enzyme catalyses N-(5-phospho-beta-D-ribosyl)anthranilate = 1-(2-carboxyphenylamino)-1-deoxy-D-ribulose 5-phosphate. Its pathway is amino-acid biosynthesis; L-tryptophan biosynthesis; L-tryptophan from chorismate: step 3/5. This Gloeothece citriformis (strain PCC 7424) (Cyanothece sp. (strain PCC 7424)) protein is N-(5'-phosphoribosyl)anthranilate isomerase.